A 501-amino-acid chain; its full sequence is Melianol synthase CYP71BQ5 (501 aa).

A helical membrane pass occupies residues 1–21 (MEFRLPVLLSFLLFFLMLVRH). Cysteine 439 lines the heme pocket.

The protein belongs to the cytochrome P450 family. Heme serves as cofactor. Mainly expressed in petioles and roots, and, to a lower extent, in leaves.

Its subcellular location is the membrane. It catalyses the reaction dihydroniloticin + 2 reduced [NADPH--hemoprotein reductase] + 2 O2 = melianol + 2 oxidized [NADPH--hemoprotein reductase] + 3 H2O + 2 H(+). It functions in the pathway secondary metabolite biosynthesis; terpenoid biosynthesis. Its function is as follows. Monooxygenase involved in the biosynthesis of limonoids triterpene natural products such as azadirachtin, an antifeedant widely used as bioinsecticide, and possessing many medicinal applications including anti-tumoral, anti-malarial, anti-rheumatic, antibacterial, anti-inflammatory, anti-pyretic and diuretic effects. Catalyzes the conversion of dihydroniloticin to the protolimonoid melianol. The sequence is that of Melianol synthase CYP71BQ5 from Melia azedarach (Chinaberry tree).